A 364-amino-acid chain; its full sequence is Protein IncC (364 aa).

3 stretches are compositionally biased toward basic and acidic residues: residues Met-1–Tyr-10, Ala-26–Gly-42, and His-89–Lys-100. Disordered regions lie at residues Met-1–Val-63 and Val-75–Gly-102.

Belongs to the ParA family.

In terms of biological role, this is one of the proteins encoded by the trfB operon; it is involved in plasmid maintenance and replication. The chain is Protein IncC (incC) from Escherichia coli.